Consider the following 478-residue polypeptide: Sodium-dependent phosphate transport protein 3 (478 aa).

N-linked (GlcNAc...) asparagine glycosylation is found at N28, N47, N56, and N69. 10 consecutive transmembrane segments (helical) span residues 98–118 (ISYGIILTLIPSGYLAGIFGA), 130–150 (SLLTLFTPLAADFGVILVIVI), 183–203 (SIAGSGAAFGSFIILCVGGLI), 211–231 (FIFYIFGSIGCVCCVLWFTVI), 273–293 (LPLWAIFMGFFSHFWLCTIII), 317–337 (LPFIAASSCTILGGQMADFLL), 341–361 (LLSLITVRKLFSSLGLLLPSL), 363–383 (AVALPFVTSSYIATIVLLILI), 405–425 (YASFLMGISRGFGLTAGIISS), and 442–462 (NVFFLSAAVNMFGLIFYLIFG).

It belongs to the major facilitator superfamily. Sodium/anion cotransporter family. Expressed in the liver, kidney, placenta, lung and thyroid (at protein level).

The protein resides in the apical cell membrane. The enzyme catalyses 3 Na(+)(out) + phosphate(out) = 3 Na(+)(in) + phosphate(in). It carries out the reaction urate(out) + n chloride(in) = urate(in) + n chloride(out). Functionally, acts as a membrane potential-dependent organic anion transporter, the transport requires a low concentration of chloride ions. Mediates chloride-dependent transport of urate. Can actively transport inorganic phosphate into cells via Na(+) cotransport. This Mus musculus (Mouse) protein is Sodium-dependent phosphate transport protein 3 (Slc17a2).